A 106-amino-acid polypeptide reads, in one-letter code: Iron-sulfur cluster assembly protein CyaY (106 aa).

It belongs to the frataxin family.

Its function is as follows. Involved in iron-sulfur (Fe-S) cluster assembly. May act as a regulator of Fe-S biogenesis. In Salmonella agona (strain SL483), this protein is Iron-sulfur cluster assembly protein CyaY.